We begin with the raw amino-acid sequence, 119 residues long: Large ribosomal subunit protein bL17 (119 aa).

The protein belongs to the bacterial ribosomal protein bL17 family. As to quaternary structure, part of the 50S ribosomal subunit. Contacts protein L32.

In Acholeplasma laidlawii (strain PG-8A), this protein is Large ribosomal subunit protein bL17.